The chain runs to 123 residues: Small ribosomal subunit protein uS12cz/uS12cy (123 aa).

The protein belongs to the universal ribosomal protein uS12 family. In terms of assembly, part of the 30S ribosomal subunit.

The protein localises to the plastid. It localises to the chloroplast. Its function is as follows. With S4 and S5 plays an important role in translational accuracy. Located at the interface of the 30S and 50S subunits. In Coffea arabica (Arabian coffee), this protein is Small ribosomal subunit protein uS12cz/uS12cy (rps12-A).